Here is a 175-residue protein sequence, read N- to C-terminus: Large ribosomal subunit protein uL30 (175 aa).

This sequence belongs to the universal ribosomal protein uL30 family. As to quaternary structure, part of the 50S ribosomal subunit.

In Pyrobaculum neutrophilum (strain DSM 2338 / JCM 9278 / NBRC 100436 / V24Sta) (Thermoproteus neutrophilus), this protein is Large ribosomal subunit protein uL30.